The chain runs to 37 residues: Cytochrome b6-f complex subunit 5 (37 aa).

The chain crosses the membrane as a helical span at residues 5–25 (LLSGIVLGLISITSAGLFVTA).

It belongs to the PetG family. In terms of assembly, the 4 large subunits of the cytochrome b6-f complex are cytochrome b6, subunit IV (17 kDa polypeptide, PetD), cytochrome f and the Rieske protein, while the 4 small subunits are PetG, PetL, PetM and PetN. The complex functions as a dimer.

The protein resides in the plastid. It localises to the chloroplast thylakoid membrane. In terms of biological role, component of the cytochrome b6-f complex, which mediates electron transfer between photosystem II (PSII) and photosystem I (PSI), cyclic electron flow around PSI, and state transitions. PetG is required for either the stability or assembly of the cytochrome b6-f complex. The polypeptide is Cytochrome b6-f complex subunit 5 (Psilotum nudum (Whisk fern)).